The following is a 677-amino-acid chain: Multicopper oxidase GIP1 (677 aa).

A signal peptide spans 1 to 23; that stretch reads MLTSPRLILLLLAWVFSALVASA. 2 consecutive Plastocyanin-like domains span residues 31–150 and 179–379; these read ITWE…IRRK and LVMV…RYKG. The N-linked (GlcNAc...) asparagine glycan is linked to asparagine 76. Cu cation is bound by residues histidine 80, histidine 82, histidine 130, and histidine 132. 4 N-linked (GlcNAc...) asparagine glycosylation sites follow: asparagine 228, asparagine 283, asparagine 396, and asparagine 478. One can recognise a Plastocyanin-like 3 domain in the interval 469–588; the sequence is DEGLVIRTKN…AGGMAIAILD (120 aa). Histidine 503 is a binding site for Cu cation. Asparagine 520 is a glycosylation site (N-linked (GlcNAc...) asparagine). The interval 629-651 is disordered; that stretch reads PLLAVSPSGGPKKDSGETSASDS.

Belongs to the multicopper oxidase family. In terms of assembly, might be part of an extracellular enzyme complex composed of GIP1, aurF, aurO and aurS.

The protein localises to the secreted. It is found in the extracellular space. The protein operates within pigment biosynthesis. Functionally, multicopper oxidase; part of the gene cluster that mediates the biosynthesis of aurofusarin, a red mycelium pigment which is acting as a mycotoxin. The first step is performed by the polyketide synthase which condenses one acetyl-CoA and 6 malonyl-CoA units to form the first intermediate, the cyclic heptaketide and yellow pigment YWA1. The C2 hydroxyl group in the pyrone ring of YWA1 is probably formed during ring closure by an aldol-type cyclization reaction. The dehydratase aurZ then acts as the first tailoring enzyme in the aurofusarin biosynthetic pathway by converting YWA1 to nor-rubrofusarin. Nor-rubrofusarin is then methylated to rubrofusarin by the O-methyltransferase aurJ. Rubrofusarin is then transported across the plasma membrane by the rubrofusarin-specific pump aurT for further enzymatic processing by the extracellular complex composed of GIP1, aurF, aurO and aurS to yield aurofusarin. This is Multicopper oxidase GIP1 from Gibberella zeae (strain ATCC MYA-4620 / CBS 123657 / FGSC 9075 / NRRL 31084 / PH-1) (Wheat head blight fungus).